Here is a 446-residue protein sequence, read N- to C-terminus: Glucose-6-phosphate isomerase (446 aa).

Glu-288 serves as the catalytic Proton donor. Residues His-309 and Lys-423 contribute to the active site.

Belongs to the GPI family.

The protein resides in the cytoplasm. The catalysed reaction is alpha-D-glucose 6-phosphate = beta-D-fructose 6-phosphate. The protein operates within carbohydrate biosynthesis; gluconeogenesis. It participates in carbohydrate degradation; glycolysis; D-glyceraldehyde 3-phosphate and glycerone phosphate from D-glucose: step 2/4. Its function is as follows. Catalyzes the reversible isomerization of glucose-6-phosphate to fructose-6-phosphate. In Lacticaseibacillus casei (strain BL23) (Lactobacillus casei), this protein is Glucose-6-phosphate isomerase.